Consider the following 343-residue polypeptide: L-threonine 3-dehydrogenase (343 aa).

C38 contributes to the Zn(2+) binding site. Active-site charge relay system residues include T40 and H43. Zn(2+) is bound by residues H63, E64, C93, C96, C99, and C107. Residues I176, D196, R201, 261-263 (LGI), and 286-288 (IAG) contribute to the NAD(+) site.

The protein belongs to the zinc-containing alcohol dehydrogenase family. Homotetramer. Requires Zn(2+) as cofactor.

The protein localises to the cytoplasm. The catalysed reaction is L-threonine + NAD(+) = (2S)-2-amino-3-oxobutanoate + NADH + H(+). The protein operates within amino-acid degradation; L-threonine degradation via oxydo-reductase pathway; glycine from L-threonine: step 1/2. In terms of biological role, catalyzes the NAD(+)-dependent oxidation of L-threonine to 2-amino-3-ketobutyrate. The protein is L-threonine 3-dehydrogenase of Thermus thermophilus (strain ATCC 27634 / DSM 579 / HB8).